A 267-amino-acid chain; its full sequence is 2-keto-3-deoxy-L-rhamnonate aldolase (267 aa).

His-49 (proton acceptor) is an active-site residue. Gln-151 is a binding site for substrate. A Mg(2+)-binding site is contributed by Glu-153. Ala-178 and Asp-179 together coordinate substrate. Asp-179 serves as a coordination point for Mg(2+).

It belongs to the HpcH/HpaI aldolase family. KDR aldolase subfamily. Homohexamer. The cofactor is Mg(2+).

It carries out the reaction 2-dehydro-3-deoxy-L-rhamnonate = (S)-lactaldehyde + pyruvate. Its function is as follows. Catalyzes the reversible retro-aldol cleavage of 2-keto-3-deoxy-L-rhamnonate (KDR) to pyruvate and lactaldehyde. The chain is 2-keto-3-deoxy-L-rhamnonate aldolase from Salmonella agona (strain SL483).